The sequence spans 428 residues: Histidine--tRNA ligase (428 aa).

The protein belongs to the class-II aminoacyl-tRNA synthetase family. In terms of assembly, homodimer.

It is found in the cytoplasm. It carries out the reaction tRNA(His) + L-histidine + ATP = L-histidyl-tRNA(His) + AMP + diphosphate + H(+). The chain is Histidine--tRNA ligase from Bordetella pertussis (strain Tohama I / ATCC BAA-589 / NCTC 13251).